The primary structure comprises 483 residues: Cobyric acid synthase (483 aa).

Residues A251 to F438 form the GATase cobBQ-type domain. Residue C333 is the Nucleophile of the active site. The active site involves H430.

The protein belongs to the CobB/CobQ family. CobQ subfamily.

The protein operates within cofactor biosynthesis; adenosylcobalamin biosynthesis. Its function is as follows. Catalyzes amidations at positions B, D, E, and G on adenosylcobyrinic A,C-diamide. NH(2) groups are provided by glutamine, and one molecule of ATP is hydrogenolyzed for each amidation. The protein is Cobyric acid synthase of Brucella suis biovar 1 (strain 1330).